The chain runs to 98 residues: MKKFLLVAVVGLAGITFANEQLAKQKGCMACHDLKAKKVGPAYADVAKKYAGRKDAVDYLAGKIKKGGSGVWGSVPMPPQNVTDAEAKQLAQWILSIK.

Positions 1–18 are cleaved as a signal peptide; it reads MKKFLLVAVVGLAGITFA. 4 residues coordinate heme c: Cys-28, Cys-31, His-32, and Met-77.

The protein belongs to the cytochrome c family. Post-translationally, binds 1 heme c group covalently per subunit.

Functionally, reacts with hydrogenase. In Hydrogenobacter thermophilus (strain DSM 6534 / IAM 12695 / TK-6), this protein is Cytochrome c-552.